Reading from the N-terminus, the 475-residue chain is Trifunctional enzyme subunit beta, mitochondrial (475 aa).

The transit peptide at 1–34 (MISLLTYTLKNLPNTSKWALRFCMRPLSSSSQLQ) directs the protein to the mitochondrion. Position 73 is an N6-acetyllysine; alternate (Lys73). Position 73 is an N6-succinyllysine; alternate (Lys73). Cys139 functions as the Acyl-thioester intermediate in the catalytic mechanism. Residues 174–221 (IRHSRKMRKMMLDLNKAKTLAQRLSIISKFRLNFLSPELPAVSEFSTS) lie within the membrane without spanning it. Residue Lys189 is modified to N6-acetyllysine; alternate. Lys189 carries the post-translational modification N6-succinyllysine; alternate. Residues Lys191 and Lys292 each carry the N6-succinyllysine modification. N6-acetyllysine; alternate is present on Lys294. Lys294 carries the post-translational modification N6-succinyllysine; alternate. Residue Lys299 is modified to N6-acetyllysine. The residue at position 333 (Lys333) is an N6-acetyllysine; alternate. Lys333 carries the N6-succinyllysine; alternate modification. N6-acetyllysine is present on residues Lys349 and Lys362. Residue Cys459 is the Proton donor/acceptor of the active site.

This sequence belongs to the thiolase-like superfamily. Thiolase family. As to quaternary structure, heterotetramer of 2 alpha/HADHA and 2 beta/HADHB subunits; forms the mitochondrial trifunctional enzyme. Also purified as higher order heterooligomers including a 4 alpha/HADHA and 4 beta/HADHB heterooligomer which physiological significance remains unclear. The mitochondrial trifunctional enzyme interacts with MTLN. Interacts with RSAD2/viperin.

The protein localises to the mitochondrion. It localises to the mitochondrion inner membrane. It is found in the mitochondrion outer membrane. The protein resides in the endoplasmic reticulum. It carries out the reaction an acyl-CoA + acetyl-CoA = a 3-oxoacyl-CoA + CoA. The enzyme catalyses butanoyl-CoA + acetyl-CoA = 3-oxohexanoyl-CoA + CoA. It catalyses the reaction hexanoyl-CoA + acetyl-CoA = 3-oxooctanoyl-CoA + CoA. The catalysed reaction is octanoyl-CoA + acetyl-CoA = 3-oxodecanoyl-CoA + CoA. It carries out the reaction decanoyl-CoA + acetyl-CoA = 3-oxododecanoyl-CoA + CoA. The enzyme catalyses dodecanoyl-CoA + acetyl-CoA = 3-oxotetradecanoyl-CoA + CoA. It catalyses the reaction tetradecanoyl-CoA + acetyl-CoA = 3-oxohexadecanoyl-CoA + CoA. It functions in the pathway lipid metabolism; fatty acid beta-oxidation. Mitochondrial trifunctional enzyme catalyzes the last three of the four reactions of the mitochondrial beta-oxidation pathway. The mitochondrial beta-oxidation pathway is the major energy-producing process in tissues and is performed through four consecutive reactions breaking down fatty acids into acetyl-CoA. Among the enzymes involved in this pathway, the trifunctional enzyme exhibits specificity for long-chain fatty acids. Mitochondrial trifunctional enzyme is a heterotetrameric complex composed of two proteins, the trifunctional enzyme subunit alpha/HADHA carries the 2,3-enoyl-CoA hydratase and the 3-hydroxyacyl-CoA dehydrogenase activities, while the trifunctional enzyme subunit beta/HADHB described here bears the 3-ketoacyl-CoA thiolase activity. This Bos taurus (Bovine) protein is Trifunctional enzyme subunit beta, mitochondrial (HADHB).